The primary structure comprises 380 residues: Cystathionine beta-lyase (380 aa).

At lysine 196 the chain carries N6-(pyridoxal phosphate)lysine.

It belongs to the trans-sulfuration enzymes family. Pyridoxal 5'-phosphate is required as a cofactor.

Its subcellular location is the cytoplasm. It catalyses the reaction L,L-cystathionine + H2O = L-homocysteine + pyruvate + NH4(+). The catalysed reaction is an S-substituted L-cysteine + H2O = a thiol + pyruvate + NH4(+). Its pathway is amino-acid biosynthesis; L-methionine biosynthesis via de novo pathway; L-homocysteine from L-cystathionine: step 1/1. In terms of biological role, the enzymatic degradation of amino acids in cheese is believed to generate aroma compounds and therefore to be essential for flavor development. Cystathionine beta-lyase (CBL) can convert cystathionine to homocysteine but is also able to catalyze an alpha, gamma elimination. With methionine as a substrate, it produces volatile sulfur compounds which are important for flavor formation in Gouda cheese. The chain is Cystathionine beta-lyase (metC) from Lactococcus lactis subsp. cremoris (Streptococcus cremoris).